Reading from the N-terminus, the 1109-residue chain is Protein phosphatase 1 regulatory subunit 3A (1109 aa).

Phosphoserine; by GSK3 occurs at positions 40 and 44. Ser-48 is subject to Phosphoserine; by PKA and ISPK. Ser-51 carries the phosphoserine modification. A Phosphothreonine modification is found at Thr-58. The PP1-binding motif motif lies at 64 to 67 (RRVS). Ser-67 is modified (phosphoserine; by PKA). A CBM21 domain is found at 124 to 232 (QLQVQKAMLE…NNNGTNYTLV (109 aa)). The span at 236–251 (KEPEPEPGKPLEEAPS) shows a compositional bias: basic and acidic residues. Disordered stretches follow at residues 236–278 (KEPE…NFEN), 340–424 (GKNT…SDGS), 436–455 (DDNA…CSFP), and 493–517 (YFKK…KEKR). Polar residues-rich tracts occupy residues 340–352 (GKNT…SNIP), 360–384 (KNQS…SAES), and 396–406 (YSSGNESSHQP). Ser-843 carries the post-translational modification Phosphoserine. Disordered regions lie at residues 945–985 (SATE…RKEK) and 1011–1048 (SREN…ETQD). A compositionally biased stretch (polar residues) spans 951 to 963 (YNCSPTRETQGQP). Composition is skewed to basic and acidic residues over residues 966 to 985 (KPEE…RKEK) and 1011 to 1034 (SREN…KEFE). Residues 1035-1048 (SSASSSLPVQETQD) are compositionally biased toward polar residues. A helical transmembrane segment spans residues 1066-1086 (FLLFLMFLVTVYHYDLMIGLA).

Interacts with PPP1CC catalytic subunit of PP1, and associates with glycogen. In terms of processing, phosphorylation at Ser-48 by ISPK stimulates the dephosphorylation of glycogen synthase and phosphorylase kinase. As to expression, skeletal muscle, diaphragm and cardiac muscle.

It localises to the membrane. In terms of biological role, seems to act as a glycogen-targeting subunit for PP1. PP1 is essential for cell division, and participates in the regulation of glycogen metabolism, muscle contractility and protein synthesis. Plays an important role in glycogen synthesis but is not essential for insulin activation of glycogen synthase. This is Protein phosphatase 1 regulatory subunit 3A (PPP1R3A) from Oryctolagus cuniculus (Rabbit).